We begin with the raw amino-acid sequence, 352 residues long: Probable tyrosine-protein kinase DDB_G0290471 (352 aa).

The 283-residue stretch at 51 to 333 (IEYVCRLGSG…ISLNQIRSFY (283 aa)) folds into the Protein kinase domain. ATP-binding positions include 57-65 (LGSGSLCRV) and Lys-78. Residue Asp-175 is the Proton acceptor of the active site.

This sequence belongs to the protein kinase superfamily. TKL Tyr protein kinase family.

It catalyses the reaction L-tyrosyl-[protein] + ATP = O-phospho-L-tyrosyl-[protein] + ADP + H(+). This chain is Probable tyrosine-protein kinase DDB_G0290471, found in Dictyostelium discoideum (Social amoeba).